We begin with the raw amino-acid sequence, 83 residues long: Exodeoxyribonuclease 7 small subunit (83 aa).

Belongs to the XseB family. As to quaternary structure, heterooligomer composed of large and small subunits.

The protein localises to the cytoplasm. It catalyses the reaction Exonucleolytic cleavage in either 5'- to 3'- or 3'- to 5'-direction to yield nucleoside 5'-phosphates.. In terms of biological role, bidirectionally degrades single-stranded DNA into large acid-insoluble oligonucleotides, which are then degraded further into small acid-soluble oligonucleotides. The protein is Exodeoxyribonuclease 7 small subunit of Rhodopseudomonas palustris (strain BisB5).